The chain runs to 146 residues: Large ribosomal subunit protein uL15 (146 aa).

A compositionally biased stretch (basic and acidic residues) spans 1–13 (MKLHELKPSEGSR). Positions 1–54 (MKLHELKPSEGSRKVRNRVGRGIGSGNGKTAGKGHKGQNARSGGGVRPGFEGGQ) are disordered. Gly residues-rich tracts occupy residues 21 to 31 (RGIGSGNGKTA) and 42 to 52 (SGGGVRPGFEG).

It belongs to the universal ribosomal protein uL15 family. Part of the 50S ribosomal subunit.

Its function is as follows. Binds to the 23S rRNA. The sequence is that of Large ribosomal subunit protein uL15 from Bacillus velezensis (strain DSM 23117 / BGSC 10A6 / LMG 26770 / FZB42) (Bacillus amyloliquefaciens subsp. plantarum).